Reading from the N-terminus, the 282-residue chain is Putative 23S rRNA (guanine-N(1)-)-methyltransferase YxjB (282 aa).

4 residues coordinate Zn(2+): cysteine 12, cysteine 15, cysteine 29, and histidine 34. Residue 103-104 (EG) coordinates S-adenosyl-L-methionine.

This sequence belongs to the methyltransferase superfamily. RlmA family.

The protein is Putative 23S rRNA (guanine-N(1)-)-methyltransferase YxjB (yxjB) of Bacillus subtilis (strain 168).